The sequence spans 63 residues: Large ribosomal subunit protein bL35 (63 aa).

The tract at residues 24–44 (RAKAYRSHRATGKTTKQKRQL) is disordered.

Belongs to the bacterial ribosomal protein bL35 family.

The polypeptide is Large ribosomal subunit protein bL35 (Mycoplasma mycoides subsp. mycoides SC (strain CCUG 32753 / NCTC 10114 / PG1)).